The following is a 492-amino-acid chain: Protein KOKOPELLI (492 aa).

Disordered stretches follow at residues 218–354 (VTSP…RNVM) and 394–426 (SKFHHKHQEKSKERKRPMSESKGLTTHKQQHQG). Residues 256 to 270 (QETETFDDDSSETEA) show a composition bias toward acidic residues. A compositionally biased stretch (low complexity) spans 287–305 (STSQEYSGETGSSSGSEWE). Residues 317–336 (ESSYPPQNDDSVSEVSTSPP) are compositionally biased toward polar residues. 2 stretches are compositionally biased toward basic and acidic residues: residues 337-348 (HTDRDTSREPGK) and 403-412 (KSKERKRPMS).

In terms of tissue distribution, mostly expressed in pollen and open flowers and, to a lower extent, in closed flowers.

In terms of biological role, positively regulates reproductive function by facilitating male gametophyte formation and double fertilization. The sequence is that of Protein KOKOPELLI from Arabidopsis thaliana (Mouse-ear cress).